The chain runs to 236 residues: tRNA (guanine-N(7)-)-methyltransferase (236 aa).

Residues aspartate 35, glutamate 60, asparagine 87, and aspartate 113 each contribute to the S-adenosyl-L-methionine site. Aspartate 113 is an active-site residue. Substrate contacts are provided by lysine 117 and aspartate 149.

The protein belongs to the class I-like SAM-binding methyltransferase superfamily. TrmB family.

It catalyses the reaction guanosine(46) in tRNA + S-adenosyl-L-methionine = N(7)-methylguanosine(46) in tRNA + S-adenosyl-L-homocysteine. It functions in the pathway tRNA modification; N(7)-methylguanine-tRNA biosynthesis. Catalyzes the formation of N(7)-methylguanine at position 46 (m7G46) in tRNA. This is tRNA (guanine-N(7)-)-methyltransferase from Prochlorococcus marinus (strain MIT 9313).